A 257-amino-acid polypeptide reads, in one-letter code: MAAPWASLRLVAPMWNGRIRGIHRLGAAVAPEGNQKKKRTILQFLTNYFYDVEALRDYLLQREMYKVHEKNRSYTWLEKQHGPYGAGAFFILKQGGAVKFRDKEWIRPDKYGHFSQEFWNFCEVPVEAVDAGDCDINYEGLDNLLRLKELQSLSLQRCCHVDDWCLSRLYPLADSLQELSLAGCPRISERGLACLHHLQNLRRLDISDLPAVSNPGLTQILVEEMLPNCEVVGVDWAEGLKSGPEEQPRDTASPVPA.

Phosphoserine is present on Ser-253.

It belongs to the ATP synthase subunit s family. Interacts with incompletely assembled mitochondrial NADH:ubiquinone oxidoreductase complex (complex I).

It is found in the mitochondrion. In terms of biological role, required for the assembly of the mitochondrial NADH:ubiquinone oxidoreductase complex (complex I). Involved in the assembly of the distal region of complex I. In Homo sapiens (Human), this protein is Distal membrane-arm assembly complex protein 2.